Here is a 72-residue protein sequence, read N- to C-terminus: Rubredoxin (72 aa).

One can recognise a Rubredoxin-like domain in the interval 19-72; that stretch reads DAVLECKICWQRYDPAEGDPVWQIPPGTPFAALPAHWRCPRCDGDREQFMVVDG. Residues Cys-24, Cys-27, Cys-57, and Cys-60 each contribute to the Fe cation site.

The protein belongs to the rubredoxin family. It depends on Fe(3+) as a cofactor.

Rubredoxin is a small nonheme, iron protein lacking acid-labile sulfide. Its single Fe, chelated to 4 Cys, functions as an electron acceptor and may also stabilize the conformation of the molecule. Could be involved in hydrogenase-linked redox processes. This Azotobacter vinelandii protein is Rubredoxin (hoxR).